Reading from the N-terminus, the 22-residue chain is Caerin-3.4 (22 aa).

Lysine 22 bears the Lysine amide mark.

In terms of tissue distribution, expressed by the skin parotoid and/or rostral glands.

It localises to the secreted. Antibacterial peptide, that adopts an alpha helical conformation which can disrupt bacterial membranes. Each caerin displays a different antimicrobial specificity. The sequence is that of Caerin-3.4 from Ranoidea caerulea (Green tree frog).